The following is a 585-amino-acid chain: Arginine--tRNA ligase (585 aa).

A 'HIGH' region motif is present at residues 131 to 141 (ANPTGPMHVGH).

The protein belongs to the class-I aminoacyl-tRNA synthetase family. As to quaternary structure, monomer.

It localises to the cytoplasm. It catalyses the reaction tRNA(Arg) + L-arginine + ATP = L-arginyl-tRNA(Arg) + AMP + diphosphate. The chain is Arginine--tRNA ligase from Bartonella henselae (strain ATCC 49882 / DSM 28221 / CCUG 30454 / Houston 1) (Rochalimaea henselae).